Reading from the N-terminus, the 209-residue chain is Peroxiredoxin (209 aa).

Residues 2–156 (PLIGDKFPEM…IVRMIRAFRV (155 aa)) form the Thioredoxin domain. Residue cysteine 44 is the Cysteine sulfenic acid (-SOH) intermediate of the active site. A substrate-binding site is contributed by arginine 119. Cysteines 198 and 204 form a disulfide.

Belongs to the peroxiredoxin family. Prx6 subfamily. Homodecamer. Pentamer of dimers that assemble into a ring structure.

Its subcellular location is the cytoplasm. It carries out the reaction a hydroperoxide + [thioredoxin]-dithiol = an alcohol + [thioredoxin]-disulfide + H2O. In terms of biological role, thiol-specific peroxidase that catalyzes the reduction of hydrogen peroxide and organic hydroperoxides to water and alcohols, respectively. Plays a role in cell protection against oxidative stress by detoxifying peroxides. This chain is Peroxiredoxin, found in Methanothermobacter thermautotrophicus (strain ATCC 29096 / DSM 1053 / JCM 10044 / NBRC 100330 / Delta H) (Methanobacterium thermoautotrophicum).